The chain runs to 1159 residues: Ferroxidase HEPHL1 (1159 aa).

A signal peptide spans 1–24; sequence MPRKQPAGCIFLLTFLGLSGLVGT. Plastocyanin-like domains are found at residues 25-207, 218-366, 379-561, 571-719, 731-907, and 915-1092; these read VTRT…LLVC, TRND…VDNC, QRRY…LLVC, TQKG…VSSC, MIRT…LITC, and KGRR…VPSN. Topologically, residues 25-1114 are extracellular; sequence VTRTYYIGIV…KNLGPTGAKA (1090 aa). Residues His127 and His129 each coordinate Cu cation. An N-linked (GlcNAc...) asparagine glycan is attached at Asn161. Residues Cys181 and Cys207 are joined by a disulfide bond. Cu cation contacts are provided by His187 and His189. N-linked (GlcNAc...) asparagine glycosylation occurs at Asn236. Cysteines 285 and 366 form a disulfide. Positions 304, 347, and 352 each coordinate Cu cation. Residue Asn407 is glycosylated (N-linked (GlcNAc...) asparagine). A disulfide bond links Cys535 and Cys561. An N-linked (GlcNAc...) asparagine glycan is attached at Asn589. A disulfide bridge connects residues Cys638 and Cys719. Cu cation contacts are provided by His657, Cys700, His705, and Met710. Asn772 carries N-linked (GlcNAc...) asparagine glycosylation. A disulfide bond links Cys881 and Cys907. N-linked (GlcNAc...) asparagine glycosylation is present at Asn935. Cu cation is bound by residues His1003, His1006, His1008, His1048, Cys1049, His1050, His1054, and Met1059. A helical transmembrane segment spans residues 1115-1135; sequence ALVILFIIGLLLLITTVILSL. The Cytoplasmic portion of the chain corresponds to 1136-1159; sequence RLCSAMKQTDYQQVQSCALPTDAL.

Belongs to the multicopper oxidase family. Cu cation serves as cofactor.

It is found in the membrane. The catalysed reaction is 4 Fe(2+) + O2 + 4 H(+) = 4 Fe(3+) + 2 H2O. Its function is as follows. Is a copper-binding glycoprotein with ferroxidase activity. It oxidizes Fe(2+) to Fe(3+) without releasing radical oxygen species. May be involved in the regulation of intracellular iron content. In Homo sapiens (Human), this protein is Ferroxidase HEPHL1 (HEPHL1).